The sequence spans 138 residues: uncharacterized protein (138 aa).

The first 35 residues, Met1–Gly35, serve as a signal peptide directing secretion.

Isoform 1 is highly expressed in small intestine, testis and kidney, medium expressed in brain and heart and low expressed in colon; it could not be detected in liver, adrenal gland and pancreas.

Its subcellular location is the secreted. This is an uncharacterized protein from Homo sapiens (Human).